We begin with the raw amino-acid sequence, 119 residues long: Protein Wnt-4 (119 aa).

A lipid anchor (O-palmitoleoyl serine; by PORCN) is attached at S1. Intrachain disulfides connect C69-C100 and C85-C95. Residue N86 is glycosylated (N-linked (GlcNAc...) asparagine).

This sequence belongs to the Wnt family. In terms of processing, palmitoleoylation is required for efficient binding to frizzled receptors. Depalmitoleoylation leads to Wnt signaling pathway inhibition.

It is found in the secreted. It localises to the extracellular space. The protein localises to the extracellular matrix. Ligand for members of the frizzled family of seven transmembrane receptors. Plays an important role in embryonic development. The polypeptide is Protein Wnt-4 (WNT-4) (Eptatretus stoutii (Pacific hagfish)).